Reading from the N-terminus, the 459-residue chain is LAS seventeen-binding protein 3 (459 aa).

The interval 219 to 403 (RPSNGGRGSF…APTSPSTSSP (185 aa)) is disordered. At S227 the chain carries Phosphoserine. Positions 229-242 (DDDEDDYYDDDDYY) are enriched in acidic residues. Residues 243–262 (NDIPSSFSSTDASSTRPNTR) are compositionally biased toward low complexity. Residues 289 to 300 (YSRNSRLAPTNS) show a composition bias toward polar residues. Position 298 is a phosphothreonine (T298). A phosphoserine mark is found at S300 and S303. Positions 340–350 (DEYDDYDDDYE) are enriched in acidic residues. The span at 351 to 371 (SGYRRGNGRDRTKDREVDDLS) shows a compositional bias: basic and acidic residues. The segment covering 372–391 (NRFSKSRISSASTPQTSQGR) has biased composition (polar residues). A Phosphothreonine modification is found at T393. A compositionally biased stretch (low complexity) spans 393-403 (TAPTSPSTSSP). S397, S402, and S416 each carry phosphoserine. Residues 400-459 (TSSPKAVALYSFAGEESGDLPFRKGDVITILKKSDSQNDWWTGRVNGREGIFPANYVELV) form the SH3 domain.

This sequence belongs to the SH3YL1 family. Interacts with LAS17. In terms of processing, phosphorylation of Ser-397 is induced 2-fold in response to mating pheromone.

It is found in the cytoplasm. This is LAS seventeen-binding protein 3 (LSB3) from Saccharomyces cerevisiae (strain YJM789) (Baker's yeast).